The chain runs to 191 residues: Xanthine phosphoribosyltransferase (191 aa).

Residues L20 and N27 each coordinate xanthine. 128–132 contacts 5-phospho-alpha-D-ribose 1-diphosphate; it reads ANGQA. K156 is a xanthine binding site.

Belongs to the purine/pyrimidine phosphoribosyltransferase family. Xpt subfamily. In terms of assembly, homodimer.

It is found in the cytoplasm. It catalyses the reaction XMP + diphosphate = xanthine + 5-phospho-alpha-D-ribose 1-diphosphate. Its pathway is purine metabolism; XMP biosynthesis via salvage pathway; XMP from xanthine: step 1/1. Functionally, converts the preformed base xanthine, a product of nucleic acid breakdown, to xanthosine 5'-monophosphate (XMP), so it can be reused for RNA or DNA synthesis. In Limosilactobacillus reuteri (strain DSM 20016) (Lactobacillus reuteri), this protein is Xanthine phosphoribosyltransferase.